Here is a 217-residue protein sequence, read N- to C-terminus: Large ribosomal subunit protein uL29m (217 aa).

It belongs to the universal ribosomal protein uL29 family. Component of the mitochondrial large ribosomal subunit. Mature mitochondrial ribosomes consist of a small (37S) and a large (54S) subunit. The 37S subunit contains at least 33 different proteins and 1 molecule of RNA (15S). The 54S subunit contains at least 45 different proteins and 1 molecule of RNA (21S).

It is found in the mitochondrion. This chain is Large ribosomal subunit protein uL29m (mrpl4), found in Neosartorya fischeri (strain ATCC 1020 / DSM 3700 / CBS 544.65 / FGSC A1164 / JCM 1740 / NRRL 181 / WB 181) (Aspergillus fischerianus).